Consider the following 263-residue polypeptide: Outer membrane lipoprotein 3 (263 aa).

The first 19 residues, Met-1 to Ala-19, serve as a signal peptide directing secretion. The N-palmitoyl cysteine moiety is linked to residue Cys-20. Cys-20 carries the S-diacylglycerol cysteine lipid modification.

It belongs to the NlpA lipoprotein family.

It is found in the cell outer membrane. The polypeptide is Outer membrane lipoprotein 3 (plpC) (Mannheimia haemolytica (Pasteurella haemolytica)).